Reading from the N-terminus, the 135-residue chain is Early E3 15.3 kDa protein (135 aa).

It belongs to the adenoviridae E3_15 family.

Functionally, protects virus-infected cells from TNF-induced cytolysis. In Human adenovirus B serotype 7 (HAdV-7), this protein is Early E3 15.3 kDa protein.